The sequence spans 484 residues: MTLRLHDSRTQSLRDFVPLVDGRVGIYVCGPTVQSAPHIGHLRSALAYDQLRRWLAYRGLDVTLVRNVTDIDDKVIDNARRGQEAGGTEEWWALAYRVELEFSRAYAALGILPPSYEPRATASIGEMQAIIGRLVERGHAYPADDGSGDVYFDTASWPEYGELTRQRAADMEAAADADPRAKRDVRDFALWKGAKPGEPASASWPSPWGAGRPGWHIECSAMSTRYLGAEFDIHGGGLDLRFPHHENELAQSRAAGDPFARYWLHNGLVAVAGQKMSKSLGNSLFAADLLASARPVVVRYFLGSAHYRSTLEFHDGALAEAEAALDRIETFLDRSARRLAGTRFQAEPAATDGAPAAVPDEFAEAMDDDLSVPQALAVLHDAVRAGNAALDAGDLQEAASLRADVSAMVAVLGIDPLADEWRTASDQPARRALQALVEHRIAERQTAREARDFALADRIRQELAEAGITIEDSPGGSHWSIDGE.

Zn(2+) is bound at residue cysteine 29. A 'HIGH' region motif is present at residues 31–41 (PTVQSAPHIGH). Residues cysteine 219, histidine 244, and glutamate 248 each contribute to the Zn(2+) site. Residues 275–279 (KMSKS) carry the 'KMSKS' region motif. Lysine 278 serves as a coordination point for ATP.

The protein belongs to the class-I aminoacyl-tRNA synthetase family. Monomer. Requires Zn(2+) as cofactor.

The protein localises to the cytoplasm. The catalysed reaction is tRNA(Cys) + L-cysteine + ATP = L-cysteinyl-tRNA(Cys) + AMP + diphosphate. This chain is Cysteine--tRNA ligase, found in Clavibacter sepedonicus (Clavibacter michiganensis subsp. sepedonicus).